Here is a 65-residue protein sequence, read N- to C-terminus: Toxin AaHIT4 (65 aa).

Residues 1 to 64 form the LCN-type CS-alpha/beta domain; sequence EHGYLLNKYT…LWNYKTNKCD (64 aa). 4 cysteine pairs are disulfide-bonded: cysteine 12/cysteine 63, cysteine 16/cysteine 38, cysteine 23/cysteine 45, and cysteine 27/cysteine 47.

The protein belongs to the long (4 C-C) scorpion toxin superfamily. Sodium channel inhibitor family. In terms of tissue distribution, expressed by the venom gland.

The protein resides in the secreted. In terms of biological role, has a toxic effect on insects and mammals and is capable of competing with anti-insect scorpion toxins for binding to the sodium channel (Nav) of insects. It also modulates the binding of alpha-type and beta-type anti-mammal scorpion toxins to the mammal sodium channel. It may act on both site 3 and site 4 of voltage-gated sodium channels. This Androctonus australis (Sahara scorpion) protein is Toxin AaHIT4.